The primary structure comprises 489 residues: Ketol-acid reductoisomerase (NADP(+)) (489 aa).

The KARI N-terminal Rossmann domain occupies 16 to 207; the sequence is LRKCKLVEKN…GSHRAGVLHS (192 aa). Residues 44 to 47, Arg-67, Ser-77, and 107 to 109 contribute to the NADP(+) site; these read CGSQ and DKQ. His-131 is an active-site residue. Gly-157 serves as a coordination point for NADP(+). 2 KARI C-terminal knotted domains span residues 208 to 343 and 344 to 483; these read SFIA…KCKI and CHKE…MVDM. Residues Asp-216, Glu-220, Glu-388, and Glu-392 each coordinate Mg(2+). Residue Ser-413 participates in substrate binding.

It belongs to the ketol-acid reductoisomerase family. The cofactor is Mg(2+).

The enzyme catalyses (2R)-2,3-dihydroxy-3-methylbutanoate + NADP(+) = (2S)-2-acetolactate + NADPH + H(+). The catalysed reaction is (2R,3R)-2,3-dihydroxy-3-methylpentanoate + NADP(+) = (S)-2-ethyl-2-hydroxy-3-oxobutanoate + NADPH + H(+). The protein operates within amino-acid biosynthesis; L-isoleucine biosynthesis; L-isoleucine from 2-oxobutanoate: step 2/4. Its pathway is amino-acid biosynthesis; L-valine biosynthesis; L-valine from pyruvate: step 2/4. In terms of biological role, involved in the biosynthesis of branched-chain amino acids (BCAA). Catalyzes an alkyl-migration followed by a ketol-acid reduction of (S)-2-acetolactate (S2AL) to yield (R)-2,3-dihydroxy-isovalerate. In the isomerase reaction, S2AL is rearranged via a Mg-dependent methyl migration to produce 3-hydroxy-3-methyl-2-ketobutyrate (HMKB). In the reductase reaction, this 2-ketoacid undergoes a metal-dependent reduction by NADPH to yield (R)-2,3-dihydroxy-isovalerate. The sequence is that of Ketol-acid reductoisomerase (NADP(+)) from Buchnera aphidicola subsp. Schlechtendalia chinensis.